The primary structure comprises 476 residues: mRNA-capping enzyme subunit beta (476 aa).

Residues 1-133 (MNVGSILNDE…KLKSTNKPRR (133 aa)) form a disordered region. 2 stretches are compositionally biased toward basic and acidic residues: residues 51-67 (LKTKETKKDWSEDEHSN) and 105-114 (HPIEQDKSEK). Residues 123-132 (SKLKSTNKPR) are compositionally biased toward basic residues.

Belongs to the fungal TPase family. As to quaternary structure, heterodimer. The mRNA-capping enzyme is composed of two separate chains alpha and beta, respectively a mRNA guanylyltransferase and an mRNA 5'-triphosphate monophosphatase. The cofactor is Mg(2+).

Its subcellular location is the nucleus. The catalysed reaction is a 5'-end triphospho-ribonucleoside in mRNA + H2O = a 5'-end diphospho-ribonucleoside in mRNA + phosphate + H(+). Its function is as follows. First step of mRNA capping. Converts the 5'-triphosphate end of a nascent mRNA chain into a diphosphate end. This is mRNA-capping enzyme subunit beta (CET1) from Debaryomyces hansenii (strain ATCC 36239 / CBS 767 / BCRC 21394 / JCM 1990 / NBRC 0083 / IGC 2968) (Yeast).